Here is a 58-residue protein sequence, read N- to C-terminus: UPF0391 membrane protein Maqu_2901 (58 aa).

The next 2 helical transmembrane spans lie at 4-24 (WAIVCLVIAVIAGILGFGGIA) and 28-48 (AGFAKILFFVFLVLLVVSLVV).

It belongs to the UPF0391 family.

The protein localises to the cell membrane. In Marinobacter nauticus (strain ATCC 700491 / DSM 11845 / VT8) (Marinobacter aquaeolei), this protein is UPF0391 membrane protein Maqu_2901.